Reading from the N-terminus, the 154-residue chain is Methylglyoxal synthase (154 aa).

The 149-residue stretch at 6–154 (GALPSRKQIA…AYIAERTKKL (149 aa)) folds into the MGS-like domain. Substrate is bound by residues H19, K23, 45-48 (TGTT), and 65-66 (SG). D71 functions as the Proton donor/acceptor in the catalytic mechanism. Substrate is bound at residue H98.

Belongs to the methylglyoxal synthase family.

The catalysed reaction is dihydroxyacetone phosphate = methylglyoxal + phosphate. Its function is as follows. Catalyzes the formation of methylglyoxal from dihydroxyacetone phosphate. This is Methylglyoxal synthase from Saccharophagus degradans (strain 2-40 / ATCC 43961 / DSM 17024).